The chain runs to 306 residues: Polyisoprenyl-teichoic acid--peptidoglycan teichoic acid transferase TagU (306 aa).

Topologically, residues 1–11 (MRNERRKKKKT) are cytoplasmic. Residues 12–32 (LLLTILTIIGLLVLGTGGYAY) traverse the membrane as a helical; Signal-anchor for type II membrane protein segment. Over 33–306 (YLWHKAASTV…TKELKESLEK (274 aa)) the chain is Extracellular.

It belongs to the LytR/CpsA/Psr (LCP) family. In terms of assembly, interacts with MreB. Interacts with FloT.

The protein localises to the cell membrane. Its subcellular location is the membrane raft. It participates in cell wall biogenesis. May catalyze the final step in cell wall teichoic acid biosynthesis, the transfer of the anionic cell wall polymers (APs) from their lipid-linked precursor to the cell wall peptidoglycan (PG). The polypeptide is Polyisoprenyl-teichoic acid--peptidoglycan teichoic acid transferase TagU (Bacillus subtilis (strain 168)).